A 100-amino-acid polypeptide reads, in one-letter code: NAD(P)H-quinone oxidoreductase subunit 4L, chloroplastic (100 aa).

The next 3 helical transmembrane spans lie at 1–21 (MIEN…YGLI), 27–47 (IKVL…LVAF), and 61–81 (FAVF…AIVF).

The protein belongs to the complex I subunit 4L family. As to quaternary structure, NDH is composed of at least 16 different subunits, 5 of which are encoded in the nucleus.

It is found in the plastid. It localises to the chloroplast thylakoid membrane. It catalyses the reaction a plastoquinone + NADH + (n+1) H(+)(in) = a plastoquinol + NAD(+) + n H(+)(out). The catalysed reaction is a plastoquinone + NADPH + (n+1) H(+)(in) = a plastoquinol + NADP(+) + n H(+)(out). In terms of biological role, NDH shuttles electrons from NAD(P)H:plastoquinone, via FMN and iron-sulfur (Fe-S) centers, to quinones in the photosynthetic chain and possibly in a chloroplast respiratory chain. The immediate electron acceptor for the enzyme in this species is believed to be plastoquinone. Couples the redox reaction to proton translocation, and thus conserves the redox energy in a proton gradient. This is NAD(P)H-quinone oxidoreductase subunit 4L, chloroplastic from Chaetosphaeridium globosum (Charophycean green alga).